The following is a 516-amino-acid chain: MVWEVKTNQMPNAVQKLLLVMDKRAPGMSDSLELLQCNENLPSSPGYNSCDEHMELDDLPELQAVQSDPTQSAIYQLSSDVSHQEYPRSSWSQNTSDIPENTHREDEVDWLTELANIATSPQSPLMQCSFYNRSSPVHIIATSKSLHSYARPPPVSSSSKSGPAFPHDHWKEETPVRHERANSESESGIFCMSSLSDDDDLGWCNSWPSTIWHCFLKGTRLCFHKESNKEWQDVEDFARAASCDNEEEIQMGTHKGYGSDGLKLLSHEESVSFGESVLKLTFDPGTVEDGLLTVECKLDHPFYVKNKGWSSFYPSLTVVQHGIPCCEIHIGDVCLPPGHPDAINFDDSGVFDTFKSYDFTPMDSSAVYVLSSMARQRRASLSCGGGPGTGQEFSGSEFSKSCGSPGSSQLSSSSLYAKAVKSHSSGTVSATSPNKCKRPMNAFMLFAKKYRVEYTQMYPGKDNRAISVILGDRWKKMKNEERRMYTLEAKALAEEQKRLNPDCWKRKRTNSGSQQH.

The tract at residues 150–182 is disordered; that stretch reads ARPPPVSSSSKSGPAFPHDHWKEETPVRHERAN. The segment covering 156–165 has biased composition (low complexity); sequence SSSSKSGPAF. Residues 166–182 show a composition bias toward basic and acidic residues; it reads PHDHWKEETPVRHERAN. One can recognise an AXH domain in the interval 203-345; sequence WCNSWPSTIW…PPGHPDAINF (143 aa). Positions 436-504 form a DNA-binding region, HMG box; sequence CKRPMNAFML…EQKRLNPDCW (69 aa).

Binds TCF4. Binds RB1. Binds the second PAH repeat of SIN3A. Post-translationally, ubiquitinated by the CTLH E3 ubiquitin-protein ligase complex, leading to subsequent proteasomal degradation.

Its subcellular location is the nucleus. Functionally, transcriptional repressor that binds to the promoter region of target genes. Plays a role in the regulation of the cell cycle and of the Wnt pathway. Binds preferentially to the sequence 5'-TTCATTCATTCA-3'. Binding to the histone H1.0 promoter is enhanced by interaction with RB1. Disrupts the interaction between DNA and TCF4. This Mus musculus (Mouse) protein is HMG box-containing protein 1 (Hbp1).